Here is a 352-residue protein sequence, read N- to C-terminus: Probable protein phosphatase 2C 56 (352 aa).

Disordered regions lie at residues 18–37 and 53–87; these read RGRR…ASRG and SSSS…ITGG. 2 stretches are compositionally biased toward low complexity: residues 23–37 and 53–75; these read AASP…ASRG and SSSS…ARTR. One can recognise a PPM-type phosphatase domain in the interval 96–343; the sequence is SWDYSSFKGR…DNITCIVLQF (248 aa). Mn(2+) is bound by residues Asp-132, Gly-133, Asp-295, and Asp-334.

This sequence belongs to the PP2C family. Mg(2+) serves as cofactor. It depends on Mn(2+) as a cofactor.

The enzyme catalyses O-phospho-L-seryl-[protein] + H2O = L-seryl-[protein] + phosphate. It catalyses the reaction O-phospho-L-threonyl-[protein] + H2O = L-threonyl-[protein] + phosphate. The protein is Probable protein phosphatase 2C 56 of Oryza sativa subsp. japonica (Rice).